Reading from the N-terminus, the 180-residue chain is 3-phenylpropionate/cinnamic acid dioxygenase subunit beta (180 aa).

Belongs to the bacterial ring-hydroxylating dioxygenase beta subunit family. This dioxygenase system consists of four proteins: the two subunits of the hydroxylase component (HcaE and HcaF), a ferredoxin (HcaC) and a ferredoxin reductase (HcaD).

The enzyme catalyses 3-phenylpropanoate + NADH + O2 + H(+) = 3-(cis-5,6-dihydroxycyclohexa-1,3-dien-1-yl)propanoate + NAD(+). The catalysed reaction is (E)-cinnamate + NADH + O2 + H(+) = (2E)-3-(cis-5,6-dihydroxycyclohexa-1,3-dien-1-yl)prop-2-enoate + NAD(+). The protein operates within aromatic compound metabolism; 3-phenylpropanoate degradation. Part of the multicomponent 3-phenylpropionate dioxygenase. Converts 3-phenylpropionic acid (PP) and cinnamic acid (CI) into 3-phenylpropionate-dihydrodiol (PP-dihydrodiol) and cinnamic acid-dihydrodiol (CI-dihydrodiol), respectively. The polypeptide is 3-phenylpropionate/cinnamic acid dioxygenase subunit beta (Photorhabdus laumondii subsp. laumondii (strain DSM 15139 / CIP 105565 / TT01) (Photorhabdus luminescens subsp. laumondii)).